Consider the following 595-residue polypeptide: MIELRHEVQGDLVTVNVVETPEDLEGFRNFIRAHLNCLAVDTETTGLDIYSDTFECRLVQFGTQDEAWVVPVELGDVFIEDVRIAIGALKRMVLQNASFDLQVLDQCFGIEMEGLWPRVLDTQILAKLVDPRPFEAGGFGHSLEELIAKFISEDQAENVKKLMAKLAAEHKTTKAKIWSTIDLFHPEYLLYAGMDTIFTARVCKSLTPLVPDVSRSLVPYEHKISEICSYIDRQGFLLDVEYSRSLAEKWLADQEVWEAIAFTEYGVEKVNSTEDLAEGLEEMGVKITGRTETGKRQVNAALLDKLVEDGNELAAIAQEAKKLGKWRKTWVQKFIDTRDSEDRCHTFINPLQARTSRMSITGIPAQTLPSSDWIVRRCFIAEPGDVMASVDYQAQELRVLAALSGDRNMIEAFENGADLHQMTADAAQVPRKVGKTANFQKVYGGGAKALAEAVGISIPVAKRVHEAFSATYPGVERLSKKLAMEAGRNGYIVNAMGRRLPVDSSRTYSALNYMIQSSSRDVTCRALIRLHEAGYTPYLRLPIHDEIVASLPASEAERAAAHIGHLMQEQMGPVLVGTDPEVGKRSWGSLYGADY.

Positions 1 to 212 constitute a 3'-5' exonuclease domain; that stretch reads MIELRHEVQG…CKSLTPLVPD (212 aa). The interval 213-595 is polymerase; it reads VSRSLVPYEH…SWGSLYGADY (383 aa).

This sequence belongs to the DNA polymerase type-A family.

It carries out the reaction DNA(n) + a 2'-deoxyribonucleoside 5'-triphosphate = DNA(n+1) + diphosphate. In terms of biological role, replicates viral genomic DNA. This polymerase possesses two enzymatic activities: DNA synthesis (polymerase) and an exonucleolytic activity that degrades single-stranded DNA in the 3'-5' direction. This chain is DNA polymerase (44), found in Mycobacterium phage L5 (Mycobacteriophage L5).